A 305-amino-acid polypeptide reads, in one-letter code: Nuclear egress protein 1 (305 aa).

The interval Met1 to Ser42 is disordered. The CCCH-type zinc-finger motif lies at Cys105–His224.

This sequence belongs to the herpesviridae NEC1 protein family. Forms a heterohexameric complex with NEC2. Interacts with capsid vertex specific component 2/CVC2; this interaction directs the capsid to the host inner nuclear membrane to initiate budding. Post-translationally, phosphorylated at serine residues in the N-terminus. This phosphorylation regulates the localization within the inner nuclear membrane.

It is found in the host nucleus inner membrane. Its function is as follows. Plays an essential role in virion nuclear egress, the first step of virion release from infected cell. Within the host nucleus, NEC1 interacts with the newly formed capsid through the vertexes and directs it to the inner nuclear membrane by associating with NEC2. Induces the budding of the capsid at the inner nuclear membrane as well as its envelopment into the perinuclear space. There, the NEC1/NEC2 complex promotes the fusion of the enveloped capsid with the outer nuclear membrane and the subsequent release of the viral capsid into the cytoplasm where it will reach the secondary budding sites in the host Golgi or trans-Golgi network. In Human herpesvirus 2 (strain HG52) (HHV-2), this protein is Nuclear egress protein 1.